A 282-amino-acid chain; its full sequence is Phosphatidylserine decarboxylase proenzyme (282 aa).

Residues Asp88, His144, and Ser247 each act as charge relay system; for autoendoproteolytic cleavage activity in the active site. The active-site Schiff-base intermediate with substrate; via pyruvic acid; for decarboxylase activity is the Ser247. A Pyruvic acid (Ser); by autocatalysis modification is found at Ser247.

Belongs to the phosphatidylserine decarboxylase family. PSD-B subfamily. Prokaryotic type I sub-subfamily. Heterodimer of a large membrane-associated beta subunit and a small pyruvoyl-containing alpha subunit. The cofactor is pyruvate. In terms of processing, is synthesized initially as an inactive proenzyme. Formation of the active enzyme involves a self-maturation process in which the active site pyruvoyl group is generated from an internal serine residue via an autocatalytic post-translational modification. Two non-identical subunits are generated from the proenzyme in this reaction, and the pyruvate is formed at the N-terminus of the alpha chain, which is derived from the carboxyl end of the proenzyme. The autoendoproteolytic cleavage occurs by a canonical serine protease mechanism, in which the side chain hydroxyl group of the serine supplies its oxygen atom to form the C-terminus of the beta chain, while the remainder of the serine residue undergoes an oxidative deamination to produce ammonia and the pyruvoyl prosthetic group on the alpha chain. During this reaction, the Ser that is part of the protease active site of the proenzyme becomes the pyruvoyl prosthetic group, which constitutes an essential element of the active site of the mature decarboxylase.

It is found in the cell membrane. It catalyses the reaction a 1,2-diacyl-sn-glycero-3-phospho-L-serine + H(+) = a 1,2-diacyl-sn-glycero-3-phosphoethanolamine + CO2. Its pathway is phospholipid metabolism; phosphatidylethanolamine biosynthesis; phosphatidylethanolamine from CDP-diacylglycerol: step 2/2. Functionally, catalyzes the formation of phosphatidylethanolamine (PtdEtn) from phosphatidylserine (PtdSer). The sequence is that of Phosphatidylserine decarboxylase proenzyme from Xanthomonas oryzae pv. oryzae (strain KACC10331 / KXO85).